The chain runs to 111 residues: UPF0122 protein CKR_1296 (111 aa).

Belongs to the UPF0122 family.

Might take part in the signal recognition particle (SRP) pathway. This is inferred from the conservation of its genetic proximity to ftsY/ffh. May be a regulatory protein. The sequence is that of UPF0122 protein CKR_1296 from Clostridium kluyveri (strain NBRC 12016).